Reading from the N-terminus, the 793-residue chain is Sucrose synthase (793 aa).

A GT-B glycosyltransferase region spans residues 263-742; it reads MISRILIVSI…ALARVAERYT (480 aa).

This sequence belongs to the glycosyltransferase 1 family. In terms of assembly, homotetramer.

It carries out the reaction an NDP-alpha-D-glucose + D-fructose = a ribonucleoside 5'-diphosphate + sucrose + H(+). The enzyme catalyses ADP-alpha-D-glucose + D-fructose = sucrose + ADP + H(+). Catalyzes the reversible conversion of sucrose and a nucleotide disphosphate (NDP) into fructose and NDP-glucose; although the reaction is freely reversible in vitro, the physiological reaction seems to be sucrose cleavage. Unlike characterized plant enzymes prefers ADP as a cosubstrate, whereas plants prefer UDP. The KM for sucrose is 45-fold lower in the presence of ADP than UDP. Its preference for ADP over UDP suggests it may directly link sucrose and glycogen metabolism. This is Sucrose synthase from Acidithiobacillus caldus (strain ATCC 51756 / DSM 8584 / KU).